The primary structure comprises 668 residues: Putative ankyrin repeat protein FPV244 (668 aa).

12 ANK repeats span residues Ile-40–Tyr-69, Glu-144–Ala-173, Tyr-177–Ile-206, Asp-210–Lys-239, Tyr-272–Ala-302, Lys-306–Ala-336, Leu-340–Ala-370, Cys-374–Ala-403, Lys-407–Ser-437, Tyr-441–Ala-471, Asn-473–Asp-502, and Asn-571–Thr-602.

The sequence is that of Putative ankyrin repeat protein FPV244 from Vertebrata (FPV).